The primary structure comprises 109 residues: Tetracenomycin F2 cyclase (109 aa).

In terms of assembly, homodimer.

The enzyme catalyses tetracenomycin F2 + H(+) = tetracenomycin F1 + H2O. It participates in antibiotic biosynthesis; tetracenomycin C biosynthesis. Functionally, catalyzing the conversion of tetracenomycin F2 to tetracenomycin F1. This is Tetracenomycin F2 cyclase (tcmI) from Streptomyces glaucescens.